A 520-amino-acid polypeptide reads, in one-letter code: GMP synthase [glutamine-hydrolyzing] (520 aa).

The Glutamine amidotransferase type-1 domain maps to 13–205 (KIIVLDYGSQ…ALNICKAKGD (193 aa)). C90 functions as the Nucleophile in the catalytic mechanism. Active-site residues include H179 and E181. The GMPS ATP-PPase domain occupies 206-395 (WSMDNFIDMQ…LGMPDHIVWR (190 aa)). 233-239 (SGGVDSS) serves as a coordination point for ATP.

As to quaternary structure, homodimer.

It catalyses the reaction XMP + L-glutamine + ATP + H2O = GMP + L-glutamate + AMP + diphosphate + 2 H(+). It functions in the pathway purine metabolism; GMP biosynthesis; GMP from XMP (L-Gln route): step 1/1. Its function is as follows. Catalyzes the synthesis of GMP from XMP. The sequence is that of GMP synthase [glutamine-hydrolyzing] from Streptococcus pneumoniae (strain ATCC 700669 / Spain 23F-1).